The primary structure comprises 215 residues: Thiamine import ATP-binding protein ThiQ (215 aa).

Positions I2 to V215 constitute an ABC transporter domain. G32–S39 serves as a coordination point for ATP.

It belongs to the ABC transporter superfamily. Thiamine importer (TC 3.A.1.19.1) family. As to quaternary structure, the complex is composed of two ATP-binding proteins (ThiQ), two transmembrane proteins (ThiP) and a solute-binding protein (ThiB).

It is found in the cell inner membrane. The enzyme catalyses thiamine(out) + ATP + H2O = thiamine(in) + ADP + phosphate + H(+). Its function is as follows. Part of the ABC transporter complex ThiBPQ involved in thiamine import. Responsible for energy coupling to the transport system. The protein is Thiamine import ATP-binding protein ThiQ of Haemophilus influenzae (strain ATCC 51907 / DSM 11121 / KW20 / Rd).